Consider the following 186-residue polypeptide: Meiotically up-regulated gene 163 protein (186 aa).

The protein resides in the mitochondrion. In terms of biological role, has a role in meiosis. This Schizosaccharomyces pombe (strain 972 / ATCC 24843) (Fission yeast) protein is Meiotically up-regulated gene 163 protein (mug163).